The sequence spans 90 residues: Probable Fe(2+)-trafficking protein (90 aa).

The protein belongs to the Fe(2+)-trafficking protein family.

Functionally, could be a mediator in iron transactions between iron acquisition and iron-requiring processes, such as synthesis and/or repair of Fe-S clusters in biosynthetic enzymes. This Nitrosomonas europaea (strain ATCC 19718 / CIP 103999 / KCTC 2705 / NBRC 14298) protein is Probable Fe(2+)-trafficking protein.